The following is a 562-amino-acid chain: MRSDMIKKGDQQAPARSLLHATGALDKPTDMNKPFVAICNSYIDIVPGHVHLRELADIAKEAIREAGAIPFEFDTIGVDDGIAMGHIGMRYSLPSREIIADAAETVINAHWFDGVFYIPNCDKITPGMLLASVRTNVPAIFCSGGPMKAGLSSEGKALTLSSMFEAVGAFKDGSISKDEFLDMEQNACPTCGSCSGMFTANSMNCLMEVLGLALPYNGTALAVSDQRREMIREAAFKLVDNIKNDLKPKDIVTREAIDDAFALDMAMGGSTNTVLHTLAIANEAGIDYDLTRINEIAKKTPYLSKIAPSSSYSMHDVHEAGGVPAIINELFKKEGTLHPDRITATGKTLRENNEDKEILNSDVIRHLDNPYDKQGGLSILYGNIAPKGAVIKVGGVDPSIKVFKGKAICFDSHDEAVEAIDNHDVREGHVVVIRYEGPKGGPGMPEMLAPTSSIVGRGLGKDVALITDGRFSGATRGIAVGHISPEAAAGGPIGLINDGDEITIDLTNRTLDVNVSTEELDARKQNVKPFKAKVKTGYLARYTALVTSANTGGIMQVPENLI.

Aspartate 80 provides a ligand contact to Mg(2+). Position 121 (cysteine 121) interacts with [2Fe-2S] cluster. Positions 122 and 123 each coordinate Mg(2+). The residue at position 123 (lysine 123) is an N6-carboxylysine. Cysteine 194 is a [2Fe-2S] cluster binding site. Glutamate 446 contacts Mg(2+). Serine 472 (proton acceptor) is an active-site residue.

It belongs to the IlvD/Edd family. In terms of assembly, homodimer. [2Fe-2S] cluster is required as a cofactor. Mg(2+) serves as cofactor.

It carries out the reaction (2R)-2,3-dihydroxy-3-methylbutanoate = 3-methyl-2-oxobutanoate + H2O. The enzyme catalyses (2R,3R)-2,3-dihydroxy-3-methylpentanoate = (S)-3-methyl-2-oxopentanoate + H2O. It participates in amino-acid biosynthesis; L-isoleucine biosynthesis; L-isoleucine from 2-oxobutanoate: step 3/4. Its pathway is amino-acid biosynthesis; L-valine biosynthesis; L-valine from pyruvate: step 3/4. Functions in the biosynthesis of branched-chain amino acids. Catalyzes the dehydration of (2R,3R)-2,3-dihydroxy-3-methylpentanoate (2,3-dihydroxy-3-methylvalerate) into 2-oxo-3-methylpentanoate (2-oxo-3-methylvalerate) and of (2R)-2,3-dihydroxy-3-methylbutanoate (2,3-dihydroxyisovalerate) into 2-oxo-3-methylbutanoate (2-oxoisovalerate), the penultimate precursor to L-isoleucine and L-valine, respectively. The chain is Dihydroxy-acid dehydratase 1 from Staphylococcus saprophyticus subsp. saprophyticus (strain ATCC 15305 / DSM 20229 / NCIMB 8711 / NCTC 7292 / S-41).